The following is a 462-amino-acid chain: NEDD8-activating enzyme E1 regulatory subunit (462 aa).

It belongs to the ubiquitin-activating E1 family. ULA1 subfamily. Heterodimer of UBA3 and ULA1. The complex binds NEDD8 and UBC12.

The protein operates within protein modification; protein neddylation. Its function is as follows. Regulatory subunit of the dimeric UBA3-ULA1 E1 enzyme. E1 activates NEDD8/RUB1 by first adenylating its C-terminal glycine residue with ATP, thereafter linking this residue to the side chain of the catalytic cysteine, yielding a NEDD8-UBA3 thioester and free AMP. E1 finally transfers NEDD8 to the catalytic cysteine of UBC12. This chain is NEDD8-activating enzyme E1 regulatory subunit (ULA1), found in Saccharomyces cerevisiae (strain ATCC 204508 / S288c) (Baker's yeast).